The primary structure comprises 280 residues: Phosphatidylglycerol--prolipoprotein diacylglyceryl transferase (280 aa).

Transmembrane regions (helical) follow at residues 30-50 (WYGLAYVAGILLGWLYARRII), 71-91 (FLLWAAGGIVLGGRIGYILFY), 106-126 (IWNGGMSFHGGLLGTTLAIII), and 132-152 (AIPLWSLFDVVAAVVPIGLFF). R154 is a binding site for a 1,2-diacyl-sn-glycero-3-phospho-(1'-sn-glycerol). Helical transmembrane passes span 188-208 (QLYEAALEGIVLLVVLAWFVY), 217-237 (GLVTGIFVCGYAASRIFVEFF), and 251-271 (WLTMGMVLSLPMALVGIWAIA).

Belongs to the Lgt family.

The protein localises to the cell inner membrane. It carries out the reaction L-cysteinyl-[prolipoprotein] + a 1,2-diacyl-sn-glycero-3-phospho-(1'-sn-glycerol) = an S-1,2-diacyl-sn-glyceryl-L-cysteinyl-[prolipoprotein] + sn-glycerol 1-phosphate + H(+). Its pathway is protein modification; lipoprotein biosynthesis (diacylglyceryl transfer). Catalyzes the transfer of the diacylglyceryl group from phosphatidylglycerol to the sulfhydryl group of the N-terminal cysteine of a prolipoprotein, the first step in the formation of mature lipoproteins. In Rhizobium meliloti (strain 1021) (Ensifer meliloti), this protein is Phosphatidylglycerol--prolipoprotein diacylglyceryl transferase.